Reading from the N-terminus, the 1015-residue chain is SPOC domain-containing protein 1 (1015 aa).

4 disordered regions span residues 73–97, 118–159, 213–320, and 344–406; these read MVSP…SPVL, GFSL…EPGG, LYPE…PRLE, and AASS…MTPL. Positions 304-320 are enriched in basic and acidic residues; sequence SQDHAEGASKKDFPRLE. The segment covering 373 to 382 has biased composition (polar residues); it reads AHPTPCQSDP. Residues 388–397 are compositionally biased toward basic and acidic residues; that stretch reads AEPHQQRAED. The 121-residue stretch at 410–530 folds into the TFIIS central domain; it reads VRSTVVRAMQ…IIEQQQKELY (121 aa). The segment at 643 to 685 is disordered; the sequence is IQKAPGPAPASSPEVLKVGETPPKEPQDRLQMPAGLKNAPPSP. Positions 688-791 constitute an SPOC domain; sequence WEGSLDMFSI…VQQVKMVLLP (104 aa). 2 disordered regions span residues 858–906 and 967–1015; these read PEDR…PGWG and QSQD…EHEC. Polar residues predominate over residues 967–978; the sequence is QSQDSLPPSTVV.

As to quaternary structure, interacts with DNMT3A, DNMT3C and DNMT3L. Interacts with C19orf84 homolog. Interacts with SPIN1; promoting recruitment to transposons marked with histone H3 trimethylated at both 'Lys-4' and 'Lys-9' (H3K4me3K9me3).

It is found in the nucleus. Its subcellular location is the chromosome. In terms of biological role, protein adapter that acts as an essential executor of PIWIL4-piRNA pathway directed transposon DNA methylation and silencing in the male embryonic germ cells. Recruited to young transposons, which are specifically marked with histone H3 trimethylated at both 'Lys-4' and 'Lys-9' (H3K4me3K9me3), via its association with SPIN1 chromatin reader, and associates with the de novo DNA methylation machinery and repressive chromatin remodeling complexes. Following this, PIWIL4 engages with nascent transposable element transcript to direct piRNA-directed DNA methylation. Not required for piRNA biosynthesis. The sequence is that of SPOC domain-containing protein 1 from Mus musculus (Mouse).